The following is a 263-amino-acid chain: Indole-3-glycerol phosphate synthase (263 aa).

Belongs to the TrpC family.

The enzyme catalyses 1-(2-carboxyphenylamino)-1-deoxy-D-ribulose 5-phosphate + H(+) = (1S,2R)-1-C-(indol-3-yl)glycerol 3-phosphate + CO2 + H2O. It functions in the pathway amino-acid biosynthesis; L-tryptophan biosynthesis; L-tryptophan from chorismate: step 4/5. In Acidithiobacillus ferrooxidans (strain ATCC 23270 / DSM 14882 / CIP 104768 / NCIMB 8455) (Ferrobacillus ferrooxidans (strain ATCC 23270)), this protein is Indole-3-glycerol phosphate synthase.